A 334-amino-acid chain; its full sequence is Galactosylgalactosylxylosylprotein 3-beta-glucuronosyltransferase 1 (334 aa).

At 1–6 (MPKRRD) the chain is on the cytoplasmic side. The segment at 3–5 (KRR) is essential for transport from endoplasmic reticulum to Golgi apparatus and interaction with SAR1A. Residues 7–27 (ILAIVLIVLPWTLLITVWHQS) form a helical; Signal-anchor for type II membrane protein membrane-spanning segment. At 28–334 (TLAPLLAVHK…KGFTDPSVEI (307 aa)) the chain is on the lumenal side. Residues 37-56 (KDEGSDPRRETPPGADPREY) form a disordered region. 91-93 (PTY) contributes to the UDP-alpha-D-glucuronate binding site. 2 positions are modified to phosphothreonine: Thr103 and Thr108. Asp122 contacts UDP-alpha-D-glucuronate. An N-linked (GlcNAc...) asparagine glycan is attached at Asn140. Residues Arg165 and Arg170 each coordinate UDP-alpha-D-glucuronate. Asn184 carries an N-linked (GlcNAc...) asparagine glycan. 195-197 (DDD) lines the UDP-alpha-D-glucuronate pocket. Asp197 lines the Mn(2+) pocket. Residues 245–254 (FDPHRPFAID) form an interaction with galactose moiety of substrate glycoprotein region. The active-site Proton donor/acceptor is Glu284. Asn303 carries N-linked (GlcNAc...) asparagine glycosylation. 311-313 (HTR) lines the UDP-alpha-D-glucuronate pocket.

The protein belongs to the glycosyltransferase 43 family. In terms of assembly, homodimer. Interacts with SAR1A. It depends on Mn(2+) as a cofactor. The soluble form derives from the membrane form by proteolytic processing. In terms of tissue distribution, mainly expressed in the brain.

The protein resides in the golgi apparatus membrane. It localises to the secreted. It is found in the endoplasmic reticulum membrane. It carries out the reaction 3-O-(beta-D-galactosyl-(1-&gt;3)-beta-D-galactosyl-(1-&gt;4)-beta-D-xylosyl)-L-seryl-[protein] + UDP-alpha-D-glucuronate = 3-O-(beta-D-GlcA-(1-&gt;3)-beta-D-Gal-(1-&gt;3)-beta-D-Gal-(1-&gt;4)-beta-D-Xyl)-L-seryl-[protein] + UDP + H(+). It participates in protein modification; protein glycosylation. Functionally, involved in the biosynthesis of L2/HNK-1 carbohydrate epitope on glycoproteins. Can also play a role in glycosaminoglycan biosynthesis. Substrates include asialo-orosomucoid (ASOR), asialo-fetuin, and asialo-neural cell adhesion molecule. Requires sphingomyelin for activity: stearoyl-sphingomyelin was the most effective, followed by palmitoyl-sphingomyelin and lignoceroyl-sphingomyelin. Activity was demonstrated only for sphingomyelin with a saturated fatty acid and not for that with an unsaturated fatty acid, regardless of the length of the acyl group. The polypeptide is Galactosylgalactosylxylosylprotein 3-beta-glucuronosyltransferase 1 (Homo sapiens (Human)).